Reading from the N-terminus, the 710-residue chain is MDQVATLRLESVDLQSSRNNKEHHTQEMGVKRLTVRRGQPFYLRLSFSRPFQSQNDHITFVAETGPKPSELLGTRATFFLTRVQPGNVWSASDFTIDSNSLQVSLFTPANAVIGHYTLKIEISQGQGHSVTYPLGTFILLFNPWSPEDDVYLPSEILLQEYIMRDYGFVYKGHERFITSWPWNYGQFEEDIIDICFEILNKSLYHLKNPAKDCSQRNDVVYVCRVVSAMINSNDDNGVLQGNWGEDYSKGVSPLEWKGSVAILQQWSARGGQPVKYGQCWVFASVMCTVMRCLGVPTRVVSNFRSAHNVDRNLTIDTYYDRNAEMLSTQKRDKIWNFHVWNECWMIRKDLPPGYNGWQVLDPTPQQTSSGLFCCGPASVKAIREGDVHLAYDTPFVYAEVNADEVIWLLGDGQAQEILAHNTSSIGKEISTKMVGSDQRQSITSSYKYPEGSPEERAVFMKASRKMLGPQRASLPFLDLLESGGLRDQPAQLQLHLARIPEWGQDLQLLLRIQRVPDSTHPRGPIGLVVRFCAQALLHGGGTQKPFWRHTVRMNLDFGKETQWPLLLPYSNYRNKLTDEKLIRVSGIAEVEETGRSMLVLKDICLEPPHLSIEVSERAEVGKALRVHVTLTNTLMVALSSCTMVLEGSGLINGQIAKDLGTLVAGHTLQIQLDLYPTKAGPRQLQVLISSNEVKEIKGYKDIFVTVAGAP.

Residues Cys279, His338, and Asp361 contribute to the active site. Ca(2+) is bound by residues Asn401, Asp403, Glu450, and Glu455.

This sequence belongs to the transglutaminase superfamily. Transglutaminase family. The cofactor is Ca(2+). Widely expressed.

The enzyme catalyses L-glutaminyl-[protein] + L-lysyl-[protein] = [protein]-L-lysyl-N(6)-5-L-glutamyl-[protein] + NH4(+). Functionally, catalyzes the cross-linking of proteins and the conjugation of polyamines to proteins. The sequence is that of Protein-glutamine gamma-glutamyltransferase Z (TGM7) from Homo sapiens (Human).